The primary structure comprises 197 residues: MKVWSKRNVQRGNRKRWVGATGSLSARLAAAGQRFSVQVLSQGLQALDPDEASALGLSRLKVGYVREVLLRVDEVAVVFARSVTAHPHSQGPWRSIRGLGTRPLADVLFGQHGIARTPLQFASLQVASSLHRHVAHAWLGATGAALASRVLPARRSVFTRGAAPLLVMEVFAAPHAPWGWLTTKTRRGPPALPRTKP.

Residues arginine 66, leucine 104, and glutamate 169 each coordinate substrate.

Belongs to the UbiC family.

The protein localises to the cytoplasm. The enzyme catalyses chorismate = 4-hydroxybenzoate + pyruvate. The protein operates within cofactor biosynthesis; ubiquinone biosynthesis. Removes the pyruvyl group from chorismate, with concomitant aromatization of the ring, to provide 4-hydroxybenzoate (4HB) for the ubiquinone pathway. This is Probable chorismate pyruvate-lyase from Albidiferax ferrireducens (strain ATCC BAA-621 / DSM 15236 / T118) (Rhodoferax ferrireducens).